The chain runs to 238 residues: Dolichyldiphosphatase 1 (238 aa).

The next 4 membrane-spanning stretches (helical) occupy residues 33-53, 100-120, 130-150, and 162-182; these read LAYLSLSPIFVVVGFLTLIIF, PSSHSQFMWFFSVYSFLFLYL, FLDLLWRHVLSLGLLTAAFLV, and WSQVFYGGVAGSLMAVAWFII.

The protein belongs to the dolichyldiphosphatase family. Widely expressed with highest levels in brain, kidney, lung and intestine.

It localises to the endoplasmic reticulum membrane. The catalysed reaction is a di-trans,poly-cis-dolichyl diphosphate + H2O = a di-trans,poly-cis-dolichyl phosphate + phosphate + H(+). It functions in the pathway protein modification; protein glycosylation. Functionally, required for efficient N-glycosylation. Necessary for maintaining optimal levels of dolichol-linked oligosaccharides. Hydrolyzes dolichyl pyrophosphate at a very high rate and dolichyl monophosphate at a much lower rate. Does not act on phosphatidate. The protein is Dolichyldiphosphatase 1 (Dolpp1) of Mus musculus (Mouse).